Reading from the N-terminus, the 545-residue chain is 2-succinyl-5-enolpyruvyl-6-hydroxy-3-cyclohexene-1-carboxylate synthase (545 aa).

The segment at 184 to 209 (PLVPDPEPHGAPTPAGRPGGRPWTYT) is disordered. Over residues 195–205 (PTPAGRPGGRP) the composition is skewed to low complexity.

It belongs to the TPP enzyme family. MenD subfamily. In terms of assembly, homodimer. It depends on Mg(2+) as a cofactor. The cofactor is Mn(2+). Thiamine diphosphate is required as a cofactor.

It carries out the reaction isochorismate + 2-oxoglutarate + H(+) = 5-enolpyruvoyl-6-hydroxy-2-succinyl-cyclohex-3-ene-1-carboxylate + CO2. It participates in quinol/quinone metabolism; 1,4-dihydroxy-2-naphthoate biosynthesis; 1,4-dihydroxy-2-naphthoate from chorismate: step 2/7. The protein operates within quinol/quinone metabolism; menaquinone biosynthesis. Its function is as follows. Catalyzes the thiamine diphosphate-dependent decarboxylation of 2-oxoglutarate and the subsequent addition of the resulting succinic semialdehyde-thiamine pyrophosphate anion to isochorismate to yield 2-succinyl-5-enolpyruvyl-6-hydroxy-3-cyclohexene-1-carboxylate (SEPHCHC). The sequence is that of 2-succinyl-5-enolpyruvyl-6-hydroxy-3-cyclohexene-1-carboxylate synthase from Mycobacterium avium (strain 104).